A 360-amino-acid polypeptide reads, in one-letter code: Fructose-bisphosphate aldolase 1 (360 aa).

Position 63 (Ser-63) interacts with D-glyceraldehyde 3-phosphate. The Proton donor role is filled by Asp-110. Positions 111, 145, 175, and 227 each coordinate Zn(2+). Gly-228 is a binding site for dihydroxyacetone phosphate. His-266 contributes to the Zn(2+) binding site. Gly-267–Ser-269 contacts dihydroxyacetone phosphate.

Belongs to the class II fructose-bisphosphate aldolase family. In terms of assembly, homodimer. It depends on Zn(2+) as a cofactor.

It carries out the reaction beta-D-fructose 1,6-bisphosphate = D-glyceraldehyde 3-phosphate + dihydroxyacetone phosphate. It functions in the pathway carbohydrate degradation; glycolysis; D-glyceraldehyde 3-phosphate and glycerone phosphate from D-glucose: step 4/4. Catalyzes the aldol condensation of dihydroxyacetone phosphate (DHAP or glycerone-phosphate) with glyceraldehyde 3-phosphate (G3P) to form fructose 1,6-bisphosphate (FBP) in gluconeogenesis and the reverse reaction in glycolysis. The polypeptide is Fructose-bisphosphate aldolase 1 (FBA1) (Paracoccidioides lutzii (strain ATCC MYA-826 / Pb01) (Paracoccidioides brasiliensis)).